The following is a 390-amino-acid chain: Phosphopentomutase (390 aa).

Mn(2+) is bound by residues Asp-10, Asp-282, His-287, Asp-323, His-324, and His-335.

It belongs to the phosphopentomutase family. It depends on Mn(2+) as a cofactor.

The protein localises to the cytoplasm. The enzyme catalyses 2-deoxy-alpha-D-ribose 1-phosphate = 2-deoxy-D-ribose 5-phosphate. It catalyses the reaction alpha-D-ribose 1-phosphate = D-ribose 5-phosphate. Its pathway is carbohydrate degradation; 2-deoxy-D-ribose 1-phosphate degradation; D-glyceraldehyde 3-phosphate and acetaldehyde from 2-deoxy-alpha-D-ribose 1-phosphate: step 1/2. Functionally, isomerase that catalyzes the conversion of deoxy-ribose 1-phosphate (dRib-1-P) and ribose 1-phosphate (Rib-1-P) to deoxy-ribose 5-phosphate (dRib-5-P) and ribose 5-phosphate (Rib-5-P), respectively. This is Phosphopentomutase from Lachnoclostridium phytofermentans (strain ATCC 700394 / DSM 18823 / ISDg) (Clostridium phytofermentans).